The sequence spans 526 residues: Reticulocyte-binding protein homolog 5 (526 aa).

The N-terminal stretch at 1–24 (MIRIKKKLILTIIYIHLFILNRLS) is a signal peptide. Residues 33 to 51 (KNQENNLTLLPIKSTEEEK) are mediates interaction with human BSG. N-linked (GlcNAc...) asparagine glycosylation is found at Asn38 and Asn214. Cystine bridges form between Cys224/Cys317 and Cys345/Cys351. The span at 259 to 279 (EIDDKSEETDDETEEVEDSIQ) shows a compositional bias: acidic residues. Positions 259 to 294 (EIDDKSEETDDETEEVEDSIQDTDSNHTPSNKKKND) are disordered. Asn297 carries N-linked (GlcNAc...) asparagine glycosylation.

Forms a complex composed of RH5, P113 and human BSG/basigin; the complex bridges the merozoite and host erythrocyte membranes. Within the complex, interacts (via C-terminus) with human BSG/basigin isoform 2 (via the extracellular domain); the interaction is independent of BSG glycosylation status. Weakly interacts with P.troglodytes BSG but not with G.gorilla BSG. Also, interacts (via N-terminus) with P113; the interaction tethers RH5 to the merozoite membrane. Component of the PfRH5 adhesion complex composed of 1 copy of CyRPA, RH5 and RIPR; the complex is formed during merozoite invasion of host erythrocytes specifically at the interface between the parasite and host membranes. Within the complex, interacts with CyRPA. CyRPA recruits RIPR to the RH5-P113-BSG complex; the formation of the PfRH5 adhesion complex increases the affinity of RH5 for BSG and probably leads to the release of RH5 from P113 while maintaining the interaction of the PfRH5 adhesion complex with BSG. In terms of processing, cleaved into a 45kDa form during merozoite invasion of host erythrocyte.

The protein localises to the secreted. It is found in the cytoplasmic vesicle. It localises to the secretory vesicle. Its subcellular location is the rhoptry lumen. The protein resides in the host cell membrane. In terms of biological role, essential for the invasion of host erythrocytes by blood stage merozoites. By binding P113 at the surface of the merozoite and human BSG/basigin on the erythrocyte membrane, leads to the establishment of a tight junction between the merozoite and host erythrocyte membranes. In addition, the interaction with BSG results in BSG dimerization which triggers an increase in intracellular Ca(2+) in the erythrocyte. This essential step leads to a rearrangement of the erythrocyte cytoskeleton required for the merozoite invasion. This chain is Reticulocyte-binding protein homolog 5, found in Plasmodium falciparum (isolate 3D7).